The chain runs to 458 residues: Hyaluronidase conohyal-P1 (458 aa).

The first 18 residues, 1-18, serve as a signal peptide directing secretion; it reads MRVVVVVTGLVVVVVATA. The tract at residues 24-47 is disordered; sequence HDVKSASSPLSSSSVYQGSSGDDC. A compositionally biased stretch (low complexity) spans 28-43; it reads SASSPLSSSSVYQGSS. The cysteines at positions 68 and 342 are disulfide-linked. N-linked (GlcNAc...) asparagine glycosylation is found at Asn-106 and Asn-141. Glu-151 functions as the Proton donor in the catalytic mechanism. Asn-261, Asn-337, and Asn-359 each carry an N-linked (GlcNAc...) asparagine glycan. The EGF-like domain occupies 363–434; the sequence is VMADCSTTLC…VRPSRCHKQQ (72 aa). 3 cysteine pairs are disulfide-bonded: Cys-367/Cys-378, Cys-372/Cys-411, and Cys-413/Cys-422.

It belongs to the glycosyl hydrolase 56 family. In terms of tissue distribution, expressed by the venom duct.

It localises to the secreted. It carries out the reaction Random hydrolysis of (1-&gt;4)-linkages between N-acetyl-beta-D-glucosamine and D-glucuronate residues in hyaluronate.. Hyaluronidase catalyzes the hydrolysis of hyaluronic acid (HA), an anionic, nonsulfated glycosaminoglycan distributed widely throughout connective, epithelial, and neural tissues. In venom, they are known to enhance diffusion of the venom by degrading the extracellular matrix. This Conus purpurascens (Purple cone) protein is Hyaluronidase conohyal-P1.